The chain runs to 190 residues: UPF0200 protein MTH_434 (190 aa).

An ATP-binding site is contributed by 10–17 (GMPGAGKG).

It belongs to the UPF0200 family.

The protein is UPF0200 protein MTH_434 of Methanothermobacter thermautotrophicus (strain ATCC 29096 / DSM 1053 / JCM 10044 / NBRC 100330 / Delta H) (Methanobacterium thermoautotrophicum).